The sequence spans 462 residues: Argininosuccinate lyase (462 aa).

Belongs to the lyase 1 family. Argininosuccinate lyase subfamily.

The protein resides in the cytoplasm. It carries out the reaction 2-(N(omega)-L-arginino)succinate = fumarate + L-arginine. Its pathway is amino-acid biosynthesis; L-arginine biosynthesis; L-arginine from L-ornithine and carbamoyl phosphate: step 3/3. The protein is Argininosuccinate lyase of Bacillus cereus (strain AH820).